The chain runs to 621 residues: Laccase-2 (621 aa).

The first 23 residues, 1–23, serve as a signal peptide directing secretion; the sequence is MMKSFFSAAALLLGLVAPSAVLA. Positions 24–48 are excised as a propeptide; that stretch reads APSLPGVPREVTRDLLRPVEERQSS. Cys-49 and Cys-57 are disulfide-bonded. 2 consecutive Plastocyanin-like domains span residues 78–201 and 210–367; these read TRTY…IVVN and IDLG…LPTN. An N-linked (GlcNAc...) asparagine glycan is attached at Asn-133. 4 residues coordinate Cu cation: His-138, His-140, His-183, and His-185. 2 disulfide bridges follow: Cys-159–Cys-586 and Cys-343–Cys-377. N-linked (GlcNAc...) asparagine glycans are attached at residues Asn-261, Asn-276, Asn-289, Asn-325, and Asn-334. Residues Asn-401, Asn-421, and Asn-441 are each glycosylated (N-linked (GlcNAc...) asparagine). The 137-residue stretch at 430-566 folds into the Plastocyanin-like 3 domain; the sequence is DKPIVDYVIA…GGLSVQYLER (137 aa). Residues His-476, His-479, His-481, His-548, Cys-549, His-550, and His-554 each coordinate Cu cation. Positions 606 to 621 are excised as a propeptide; the sequence is KVKKWVGEHPDWYIKN.

This sequence belongs to the multicopper oxidase family. In terms of assembly, monomer. Cu cation is required as a cofactor. In terms of processing, proteolytically processed at both its N-terminus and its C-terminus.

It localises to the secreted. It catalyses the reaction 4 hydroquinone + O2 = 4 benzosemiquinone + 2 H2O. In terms of biological role, probably involved in lignin degradation and in the detoxification of lignin-derived products in its natural habitat (herbivorous dung), which is rich in lignin of grasses and straw. Probably involved in melanin synthesis and in perithecia development. The protein is Laccase-2 (LAC2) of Podospora anserina (Pleurage anserina).